We begin with the raw amino-acid sequence, 281 residues long: L-alanyl-D-glutamate peptidase (281 aa).

Belongs to the peptidase M15C family.

The protein resides in the secreted. Functionally, cell wall lytic enzyme. Hydrolyzes the link between L-alanine and D-glutamate residues in certain bacterial cell-wall glycopeptides. This is L-alanyl-D-glutamate peptidase (ply) from Listeria phage A118 (Bacteriophage A118).